The following is a 453-amino-acid chain: Serine incorporator 1 (453 aa).

A lipid anchor (N-myristoyl glycine) is attached at Gly2. The Cytoplasmic segment spans residues Gly2–Arg39. A helical transmembrane segment spans residues Leu40–Gly60. Residues Met61–Lys88 lie on the Lumenal side of the membrane. The helical transmembrane segment at Ala89–Ile109 threads the bilayer. The Cytoplasmic portion of the chain corresponds to Lys110–Asn123. A helical transmembrane segment spans residues Gly124 to Pro144. Over Glu145–Val151 the chain is Lumenal. A helical membrane pass occupies residues Trp152–Ile172. Residues Asp173–Ala197 lie on the Cytoplasmic side of the membrane. Residues Leu198–Val218 traverse the membrane as a helical segment. Over Tyr219–Ala231 the chain is Lumenal. A helical transmembrane segment spans residues Phe232 to Ile252. Residues Gln253–Ser259 lie on the Cytoplasmic side of the membrane. Residues Gly260–Thr280 traverse the membrane as a helical segment. The Lumenal segment spans residues Asn281–Ser309. Residues Val310–Tyr330 form a helical membrane-spanning segment. The Cytoplasmic portion of the chain corresponds to Ser331–Ser387. The residue at position 351 (Ser351) is a Phosphoserine. Thr352 is modified (phosphothreonine). 2 positions are modified to phosphoserine: Ser361 and Ser364. Residues Phe388–Tyr408 traverse the membrane as a helical segment. Topologically, residues Arg409–Lys426 are lumenal. A helical membrane pass occupies residues Ile427 to Leu447. Residues Thr448–Asp453 lie on the Cytoplasmic side of the membrane.

It belongs to the TDE1 family. In terms of assembly, interacts with SPTLC1. Highly expressed in the neuronal populations such as Purkinje cells in the cerebellum, brainstem and spinal motor neurons, locus coeruleus and raphe nuclei.

Its subcellular location is the endoplasmic reticulum membrane. Enhances the incorporation of serine into phosphatidylserine and sphingolipids. This is Serine incorporator 1 (Serinc1) from Mus musculus (Mouse).